A 118-amino-acid chain; its full sequence is Co-chaperonin GroES (118 aa).

This sequence belongs to the GroES chaperonin family. Heptamer of 7 subunits arranged in a ring. Interacts with the chaperonin GroEL.

The protein localises to the cytoplasm. Its function is as follows. Together with the chaperonin GroEL, plays an essential role in assisting protein folding. The GroEL-GroES system forms a nano-cage that allows encapsulation of the non-native substrate proteins and provides a physical environment optimized to promote and accelerate protein folding. GroES binds to the apical surface of the GroEL ring, thereby capping the opening of the GroEL channel. This Helicobacter pylori (strain Shi470) protein is Co-chaperonin GroES.